A 153-amino-acid polypeptide reads, in one-letter code: Ribosomal RNA large subunit methyltransferase H (153 aa).

Residues Leu70, Gly102, and 121–126 (LSRMTF) each bind S-adenosyl-L-methionine.

This sequence belongs to the RNA methyltransferase RlmH family. In terms of assembly, homodimer.

It localises to the cytoplasm. The enzyme catalyses pseudouridine(1915) in 23S rRNA + S-adenosyl-L-methionine = N(3)-methylpseudouridine(1915) in 23S rRNA + S-adenosyl-L-homocysteine + H(+). Specifically methylates the pseudouridine at position 1915 (m3Psi1915) in 23S rRNA. The polypeptide is Ribosomal RNA large subunit methyltransferase H (Geobacter sulfurreducens (strain ATCC 51573 / DSM 12127 / PCA)).